Consider the following 334-residue polypeptide: Aspartate carbamoyltransferase catalytic subunit (334 aa).

Residues Arg-71 and Thr-72 each contribute to the carbamoyl phosphate site. Residue Lys-99 participates in L-aspartate binding. Residues Arg-121, His-151, and Gln-154 each contribute to the carbamoyl phosphate site. Positions 184 and 239 each coordinate L-aspartate. Residues Gly-280 and Pro-281 each coordinate carbamoyl phosphate.

It belongs to the aspartate/ornithine carbamoyltransferase superfamily. ATCase family. In terms of assembly, heterododecamer (2C3:3R2) of six catalytic PyrB chains organized as two trimers (C3), and six regulatory PyrI chains organized as three dimers (R2).

It carries out the reaction carbamoyl phosphate + L-aspartate = N-carbamoyl-L-aspartate + phosphate + H(+). The protein operates within pyrimidine metabolism; UMP biosynthesis via de novo pathway; (S)-dihydroorotate from bicarbonate: step 2/3. Catalyzes the condensation of carbamoyl phosphate and aspartate to form carbamoyl aspartate and inorganic phosphate, the committed step in the de novo pyrimidine nucleotide biosynthesis pathway. The protein is Aspartate carbamoyltransferase catalytic subunit of Pseudomonas fluorescens (strain Pf0-1).